The primary structure comprises 174 residues: Regenerating islet-derived protein 3-gamma (174 aa).

Positions 1-26 are cleaved as a signal peptide; the sequence is MLPRITITIMSWMLLSCLMLLSQVQG. Positions 27-37 are excised as a propeptide; that stretch reads EVAKKDAPSSR. 3 disulfides stabilise this stretch: C40-C51, C68-C170, and C145-C162. Residues 47–171 enclose the C-type lectin domain; the sequence is YGSYCYALFS…CNLELPYVCK (125 aa). The tract at residues 103 to 118 is sufficient to activate EXTL3; the sequence is WIGLHDPTLGYEPNRG. H107 contributes to the Zn(2+) binding site. The short motif at 114–116 is the EPN element; the sequence is EPN. Zn(2+) is bound by residues E121 and H144.

As to quaternary structure, forms a hexameric membrane-permeabilizing oligomeric pore on membrane phospholipids. The hexamer is formed by three dimers related by helical symmetry. Forms filaments, filamentation traps pore complexes and limits damage to host cells. Interacts with EXTL3. In terms of processing, proteolytic processing by trypsin removes an inhibitory N-terminal propeptide and is essential for peptidoglycan binding and antibacterial activity. In terms of tissue distribution, predominantly expressed in the small intestine, including Paneth cells (at protein level). Hardly detectable in the colon (at protein level). Highly expressed in the lung epithelium during methicillin-resistant S.aureus infection and allergic airway inflammation (at protein level). Skin injury increases its epidermal expression. Also expressed in the pancreas. Expressed by nocireceptors.

The protein localises to the secreted. Its subcellular location is the cytoplasm. Lipopolysaccharide inhibits pore-forming activity, explaining why is bactericidal for Gram-positive but not Gram-negative bacteria. In terms of biological role, bactericidal C-type lectin which acts exclusively against Gram-positive bacteria and mediates bacterial killing by binding to surface-exposed carbohydrate moieties of peptidoglycan. Restricts bacterial colonization of the intestinal epithelial surface and consequently limits activation of adaptive immune responses by the microbiota. Functionally, acts as a hormone in response to different stimuli like anti-inflammatory signals, such as IL17A, or gut microbiome. Is secreted by different cell types to activate its receptor EXTL3 and induce cell specific signaling pathways. Induced by IL17A in keratinocytes, regulates keratinocyte proliferation and differentiation after skin injury. In parallel, inhibits skin inflammation through the inhibition of inflammatory cytokines such as IL6 and TNF. Induced by IL22 in lung epithelial cells, inhibits cytokine production and regulates allergic airway inflammation. Induced in small intestine by inulin-enriched diet and Lactobacillus gasseri enriched microbiome, plays a role in the improvement of gut barrier function, the regulation of energy balance and glucose levels. Modulates microbiota composition in duodenal contents. Produced by nociceptor in response to endotoxins, prevents endotoxic death by targeting kynurenine pathway in microglia. Its function is as follows. Has bacteriostatic activity. Has bactericidal activity against L.monocytogenes and methicillin-resistant S.aureus. In Mus musculus (Mouse), this protein is Regenerating islet-derived protein 3-gamma.